An 86-amino-acid chain; its full sequence is Curamycin polyketide synthase acyl carrier protein (86 aa).

Positions 7 to 86 (QVTVEELATL…VVNGALASGA (80 aa)) constitute a Carrier domain. O-(pantetheine 4'-phosphoryl)serine is present on Ser44.

4'-phosphopantetheine is transferred from CoA to a specific serine of the apo-ACP-like protein.

Its pathway is antibiotic biosynthesis; curamycin biosynthesis. In terms of biological role, acyl carrier protein. This Streptomyces cyaneus (Streptomyces curacoi) protein is Curamycin polyketide synthase acyl carrier protein (curE).